Consider the following 272-residue polypeptide: Cytochrome c1 (272 aa).

Residues 1–24 form the signal peptide; the sequence is MTTIVKRALVAAGMVLAIGGAAQA. Heme c contacts are provided by cysteine 61, cysteine 64, histidine 65, and methionine 200. A helical membrane pass occupies residues 244–261; the sequence is LGLKVLLFLGVLTAMLLA.

As to quaternary structure, the main subunits of complex b-c1 are: cytochrome b, cytochrome c1 and the Rieske protein. In terms of processing, binds 1 heme c group covalently per subunit.

The protein resides in the cell membrane. Its function is as follows. Component of the ubiquinol-cytochrome c reductase complex (complex III or cytochrome b-c1 complex), which is a respiratory chain that generates an electrochemical potential coupled to ATP synthesis. This chain is Cytochrome c1 (petC), found in Rhodospirillum rubrum.